We begin with the raw amino-acid sequence, 460 residues long: MAEKKMWGGRFKQGTATLVEEYTESVSYDRALYAQDIAGSMAHARMLARQGVLTAEEAAIIVDGLATVRSEIEAGSFVWRREFEDVHMNIENRLTELVGDVGKKLHTGRSRNDQVALDFRLFVSDRVRVWRELGRDLVGVIVDQARQHTATLLPGCTHMQPAQPVSLAQHLLAYAWMLRRDIDRLEDCDKRARVCPLGAAALAGTTYPLDPASVADELGMYGTFRNSMDAVSDRDFVLEALFDGSVIMAHLSRLCEEFILWANPAFGYIFLPDAYATGSSIMPQKKNPDVAELMRGKTGRVYGALTTMLTTVKGLPMTYNRDLQEDKEPFIDADRTVSASLEIMAGMLREVRFNTARMRTALRSGFLNATELADYLVGKGIPFREAHHLTGAAVALAEEKGVTLEELPLEDYRGICDRIDEDVYPILEPEAAVSRRETPGGTGPRSVAAQIAELDSWLGR.

The protein belongs to the lyase 1 family. Argininosuccinate lyase subfamily.

The protein resides in the cytoplasm. The catalysed reaction is 2-(N(omega)-L-arginino)succinate = fumarate + L-arginine. Its pathway is amino-acid biosynthesis; L-arginine biosynthesis; L-arginine from L-ornithine and carbamoyl phosphate: step 3/3. This chain is Argininosuccinate lyase, found in Nitratidesulfovibrio vulgaris (strain ATCC 29579 / DSM 644 / CCUG 34227 / NCIMB 8303 / VKM B-1760 / Hildenborough) (Desulfovibrio vulgaris).